Consider the following 431-residue polypeptide: Serine--tRNA ligase (431 aa).

235-237 (TAE) is a binding site for L-serine. ATP is bound by residues 266–268 (RRE) and V282. E289 is a binding site for L-serine. 353-356 (EASS) contributes to the ATP binding site. S389 is an L-serine binding site.

Belongs to the class-II aminoacyl-tRNA synthetase family. Type-1 seryl-tRNA synthetase subfamily. In terms of assembly, homodimer. The tRNA molecule binds across the dimer.

It localises to the cytoplasm. It catalyses the reaction tRNA(Ser) + L-serine + ATP = L-seryl-tRNA(Ser) + AMP + diphosphate + H(+). The catalysed reaction is tRNA(Sec) + L-serine + ATP = L-seryl-tRNA(Sec) + AMP + diphosphate + H(+). Its pathway is aminoacyl-tRNA biosynthesis; selenocysteinyl-tRNA(Sec) biosynthesis; L-seryl-tRNA(Sec) from L-serine and tRNA(Sec): step 1/1. Functionally, catalyzes the attachment of serine to tRNA(Ser). Is also able to aminoacylate tRNA(Sec) with serine, to form the misacylated tRNA L-seryl-tRNA(Sec), which will be further converted into selenocysteinyl-tRNA(Sec). The protein is Serine--tRNA ligase of Chlorobium phaeobacteroides (strain DSM 266 / SMG 266 / 2430).